The sequence spans 406 residues: Cysteine desulfurase IscS (406 aa).

Pyridoxal 5'-phosphate-binding positions include Ala-75–Thr-76, Asn-155, Gln-183, and Ser-203–His-205. N6-(pyridoxal phosphate)lysine is present on Lys-206. Thr-243 contacts pyridoxal 5'-phosphate. Cys-330 functions as the Cysteine persulfide intermediate in the catalytic mechanism. [2Fe-2S] cluster is bound at residue Cys-330.

This sequence belongs to the class-V pyridoxal-phosphate-dependent aminotransferase family. NifS/IscS subfamily. In terms of assembly, homodimer. Forms a heterotetramer with IscU, interacts with other sulfur acceptors. It depends on pyridoxal 5'-phosphate as a cofactor.

The protein resides in the cytoplasm. The catalysed reaction is (sulfur carrier)-H + L-cysteine = (sulfur carrier)-SH + L-alanine. It functions in the pathway cofactor biosynthesis; iron-sulfur cluster biosynthesis. Master enzyme that delivers sulfur to a number of partners involved in Fe-S cluster assembly, tRNA modification or cofactor biosynthesis. Catalyzes the removal of elemental sulfur atoms from cysteine to produce alanine. Functions as a sulfur delivery protein for Fe-S cluster synthesis onto IscU, an Fe-S scaffold assembly protein, as well as other S acceptor proteins. The polypeptide is Cysteine desulfurase IscS (Haemophilus ducreyi (strain 35000HP / ATCC 700724)).